The following is a 276-amino-acid chain: Nickel import system permease protein NikC (276 aa).

5 consecutive transmembrane segments (helical) span residues 10-30 (LIFFVFGAFIFVMIVLQFFVS), 73-93 (LFVTVLTLIAIVVIGVTLGLF), 108-128 (FIDVGLSIPEFIIVIALASFF), 186-206 (IIPAIIVLMVVDFGKIILYIS), and 238-258 (IMLIAPASVIAITILIFNLTG). The 190-residue stretch at 69–258 (ARSTLFVTVL…ITILIFNLTG (190 aa)) folds into the ABC transmembrane type-1 domain.

Belongs to the binding-protein-dependent transport system permease family. OppBC subfamily. As to quaternary structure, the complex is composed of two ATP-binding proteins (NikD and NikE), two transmembrane proteins (NikB and NikC) and a solute-binding protein (NikA).

The protein localises to the cell membrane. Functionally, part of the ABC transporter complex NikABCDE (Opp2) involved in nickel import. Probably responsible for the translocation of the substrate across the membrane. The chain is Nickel import system permease protein NikC from Staphylococcus aureus (strain bovine RF122 / ET3-1).